A 512-amino-acid chain; its full sequence is Kynurenine 3-monooxygenase (512 aa).

The protein belongs to the aromatic-ring hydroxylase family. KMO subfamily. FAD serves as cofactor.

It localises to the mitochondrion outer membrane. It carries out the reaction L-kynurenine + NADPH + O2 + H(+) = 3-hydroxy-L-kynurenine + NADP(+) + H2O. Its pathway is cofactor biosynthesis; NAD(+) biosynthesis; quinolinate from L-kynurenine: step 1/3. Functionally, catalyzes the hydroxylation of L-kynurenine (L-Kyn) to form 3-hydroxy-L-kynurenine (L-3OHKyn). Required for synthesis of quinolinic acid. This is Kynurenine 3-monooxygenase (bna4) from Neosartorya fischeri (strain ATCC 1020 / DSM 3700 / CBS 544.65 / FGSC A1164 / JCM 1740 / NRRL 181 / WB 181) (Aspergillus fischerianus).